A 205-amino-acid polypeptide reads, in one-letter code: 3-demethoxyubiquinol 3-hydroxylase (205 aa).

Residues glutamate 54, glutamate 84, histidine 87, glutamate 136, glutamate 168, and histidine 171 each contribute to the Fe cation site.

The protein belongs to the COQ7 family. Requires Fe cation as cofactor.

The protein resides in the cell membrane. The catalysed reaction is a 5-methoxy-2-methyl-3-(all-trans-polyprenyl)benzene-1,4-diol + AH2 + O2 = a 3-demethylubiquinol + A + H2O. Its pathway is cofactor biosynthesis; ubiquinone biosynthesis. Functionally, catalyzes the hydroxylation of 2-nonaprenyl-3-methyl-6-methoxy-1,4-benzoquinol during ubiquinone biosynthesis. The polypeptide is 3-demethoxyubiquinol 3-hydroxylase (Paracidovorax citrulli (strain AAC00-1) (Acidovorax citrulli)).